We begin with the raw amino-acid sequence, 230 residues long: Type II restriction enzyme Eco47I (230 aa).

The enzyme catalyses Endonucleolytic cleavage of DNA to give specific double-stranded fragments with terminal 5'-phosphates.. In terms of biological role, a P subtype restriction enzyme that recognizes the double-stranded sequence 5'-GGWCC-3' and cleaves after G-1. The chain is Type II restriction enzyme Eco47I from Escherichia coli.